Consider the following 145-residue polypeptide: Mannitol-specific phosphotransferase enzyme IIA component (145 aa).

The PTS EIIA type-2 domain occupies 4–144 (PILKKENIVL…EEILSILNEV (141 aa)). Residue histidine 64 is the Tele-phosphohistidine intermediate of the active site. Histidine 64 is subject to Phosphohistidine; by HPr.

The protein resides in the cytoplasm. Its function is as follows. The phosphoenolpyruvate-dependent sugar phosphotransferase system (sugar PTS), a major carbohydrate active transport system, catalyzes the phosphorylation of incoming sugar substrates concomitantly with their translocation across the cell membrane. The enzyme II CmtAB PTS system is involved in D-mannitol transport. The polypeptide is Mannitol-specific phosphotransferase enzyme IIA component (Geobacillus stearothermophilus (Bacillus stearothermophilus)).